The following is a 347-amino-acid chain: Probable 3-hydroxyisobutyrate dehydrogenase, mitochondrial (347 aa).

A mitochondrion-targeting transit peptide spans 1–34 (MAIRRAQTLLCLSKFKTNFVSGSLHRFSSSSQNS). NAD(+) contacts are provided by residues 38–67 (QNVG…TVHD), 101–102 (LP), and T134. The active site involves K219. Residue K294 participates in NAD(+) binding.

This sequence belongs to the HIBADH-related family. 3-hydroxyisobutyrate dehydrogenase subfamily.

It is found in the mitochondrion. The enzyme catalyses 3-hydroxy-2-methylpropanoate + NAD(+) = 2-methyl-3-oxopropanoate + NADH + H(+). It functions in the pathway amino-acid degradation; L-valine degradation. The chain is Probable 3-hydroxyisobutyrate dehydrogenase, mitochondrial from Arabidopsis thaliana (Mouse-ear cress).